A 968-amino-acid polypeptide reads, in one-letter code: Protein translocase subunit SecA 1 (968 aa).

ATP-binding positions include Gln86, 104 to 108, and Asp493; that span reads GEGKT. Composition is skewed to basic and acidic residues over residues 858–868 and 883–898; these read EAEKTEDKAED and ESAK…ESVA. Residues 858 to 968 form a disordered region; it reads EAEKTEDKAE…KCHGAPKSRV (111 aa). Cys949, Cys951, Cys960, and His961 together coordinate Zn(2+). Over residues 955 to 968 the composition is skewed to basic residues; sequence KKYKKCHGAPKSRV.

It belongs to the SecA family. Monomer and homodimer. Part of the essential Sec protein translocation apparatus which comprises SecA, SecYEG and auxiliary proteins SecDF. Other proteins may also be involved. Zn(2+) is required as a cofactor.

Its subcellular location is the cell membrane. The protein localises to the cytoplasm. It catalyses the reaction ATP + H2O + cellular proteinSide 1 = ADP + phosphate + cellular proteinSide 2.. In terms of biological role, part of the Sec protein translocase complex. Interacts with the SecYEG preprotein conducting channel. Has a central role in coupling the hydrolysis of ATP to the transfer of proteins into and across the cell membrane, serving as an ATP-driven molecular motor driving the stepwise translocation of polypeptide chains across the membrane. In Thermobifida fusca (strain YX), this protein is Protein translocase subunit SecA 1.